We begin with the raw amino-acid sequence, 149 residues long: 3-dehydroquinate dehydratase (149 aa).

Residue Tyr26 is the Proton acceptor of the active site. Substrate contacts are provided by Asn77, His83, and Asp90. The active-site Proton donor is His103. Substrate is bound by residues 104 to 105 (LS) and Arg114.

It belongs to the type-II 3-dehydroquinase family. As to quaternary structure, homododecamer.

The catalysed reaction is 3-dehydroquinate = 3-dehydroshikimate + H2O. The protein operates within metabolic intermediate biosynthesis; chorismate biosynthesis; chorismate from D-erythrose 4-phosphate and phosphoenolpyruvate: step 3/7. In terms of biological role, catalyzes a trans-dehydration via an enolate intermediate. The polypeptide is 3-dehydroquinate dehydratase (Aeromonas hydrophila subsp. hydrophila (strain ATCC 7966 / DSM 30187 / BCRC 13018 / CCUG 14551 / JCM 1027 / KCTC 2358 / NCIMB 9240 / NCTC 8049)).